Reading from the N-terminus, the 303-residue chain is Aliphatic sulfonates import ATP-binding protein SsuB (303 aa).

Residues 39–263 (LHVRQVVKRY…ERGAAGFAQL (225 aa)) form the ABC transporter domain. 71 to 78 (GRSGCGKS) contributes to the ATP binding site.

This sequence belongs to the ABC transporter superfamily. Aliphatic sulfonates importer (TC 3.A.1.17.2) family. As to quaternary structure, the complex is composed of two ATP-binding proteins (SsuB), two transmembrane proteins (SsuC) and a solute-binding protein (SsuA).

The protein resides in the cell inner membrane. It catalyses the reaction ATP + H2O + aliphatic sulfonate-[sulfonate-binding protein]Side 1 = ADP + phosphate + aliphatic sulfonateSide 2 + [sulfonate-binding protein]Side 1.. In terms of biological role, part of the ABC transporter complex SsuABC involved in aliphatic sulfonates import. Responsible for energy coupling to the transport system. This Cupriavidus necator (strain ATCC 17699 / DSM 428 / KCTC 22496 / NCIMB 10442 / H16 / Stanier 337) (Ralstonia eutropha) protein is Aliphatic sulfonates import ATP-binding protein SsuB.